A 290-amino-acid chain; its full sequence is Festuclavine dehydrogenase easG (290 aa).

This sequence belongs to the fgaFS/easG family.

It catalyses the reaction festuclavine + NAD(+) = 6,8-dimethyl-6,7-didehydroergoline + NADH + H(+). It functions in the pathway alkaloid biosynthesis; ergot alkaloid biosynthesis. In terms of biological role, festuclavine dehydrogenase; part of the gene cluster that mediates the biosynthesis of fumiclavanine C, a fungal ergot alkaloid. DmaW catalyzes the first step of ergot alkaloid biosynthesis by condensing dimethylallyl diphosphate (DMAP) and tryptophan to form 4-dimethylallyl-L-tryptophan. The second step is catalyzed by the methyltransferase easF that methylates 4-dimethylallyl-L-tryptophan in the presence of S-adenosyl-L-methionine, resulting in the formation of 4-dimethylallyl-L-abrine. The catalase easC and the FAD-dependent oxidoreductase easE then transform 4-dimethylallyl-L-abrine to chanoclavine-I which is further oxidized by EasD in the presence of NAD(+), resulting in the formation of chanoclavine-I aldehyde. EasA reduces chanoclavine-I aldehyde to dihydrochanoclavine-I aldehyde that spontaneously dehydrates to form 6,8-dimethyl-6,7-didehydroergoline. EasG then catalyzes the reduction of 6,8-dimethyl-6,7-didehydroergoline to form festuclavine. Hydrolysis of festuclavine by easM then leads to the formation of fumigaclavine B which is in turn acetylated by easN to fumigaclavine A. Finally, easL catalyzes the conversion of fumigaclavine A into fumigaclavine C by attaching a dimethylallyl moiety to C-2 of the indole nucleus. The sequence is that of Festuclavine dehydrogenase easG from Aspergillus fumigatus (strain ATCC MYA-4609 / CBS 101355 / FGSC A1100 / Af293) (Neosartorya fumigata).